Consider the following 29-residue polypeptide: NAD(P)H-quinone oxidoreductase subunit 5, chloroplastic (29 aa).

The chain crosses the membrane as a helical span at residues 1 to 15 (SGSIIHSMEANVGYS).

The protein belongs to the complex I subunit 5 family. As to quaternary structure, NDH is composed of at least 16 different subunits, 5 of which are encoded in the nucleus.

It localises to the plastid. The protein resides in the chloroplast thylakoid membrane. The catalysed reaction is a plastoquinone + NADH + (n+1) H(+)(in) = a plastoquinol + NAD(+) + n H(+)(out). The enzyme catalyses a plastoquinone + NADPH + (n+1) H(+)(in) = a plastoquinol + NADP(+) + n H(+)(out). NDH shuttles electrons from NAD(P)H:plastoquinone, via FMN and iron-sulfur (Fe-S) centers, to quinones in the photosynthetic chain and possibly in a chloroplast respiratory chain. The immediate electron acceptor for the enzyme in this species is believed to be plastoquinone. Couples the redox reaction to proton translocation, and thus conserves the redox energy in a proton gradient. The chain is NAD(P)H-quinone oxidoreductase subunit 5, chloroplastic from Pseudotsuga menziesii (Douglas-fir).